The primary structure comprises 125 residues: Subtelomeric hrmA-associated cluster protein cgnA (125 aa).

23 G-Q-I/R/S repeats span residues 11 to 13 (GQI), 14 to 16 (GPI), 17 to 19 (GQR), 20 to 22 (GQS), 23 to 25 (GQR), 26 to 28 (GQS), 29 to 31 (GQR), 32 to 34 (GQS), 35 to 37 (GQI), 38 to 40 (GQS), 41 to 43 (GQS), 44 to 46 (GQS), 47 to 49 (GQS), 50 to 52 (GQS), 53 to 55 (GQI), 56 to 58 (GQI), 59 to 61 (GQI), 62 to 64 (GQI), 65 to 67 (GQI), 68 to 70 (GQI), 71 to 73 (GQI), 74 to 76 (GQI), and 77 to 79 (GQA). Residues 11-79 (GQIGPIGQRG…IGQIGQIGQA (69 aa)) are 23 X 3 AA approximate tandem repeats of G-Q-I/R/S. A disordered region spans residues 15 to 57 (PIGQRGQSGQRGQSGQRGQSGQIGQSGQSGQSGQSGQSGQIGQ).

Its subcellular location is the secreted. Functionally, hypoxia responsive morphology factor that modulates the expression of the subtelomeric hrmA-associated cluster (HAC) containing genes that alter the hyphal surface (such as reduced total chitin or increased beta-glucan exposure) and perturb inter-hyphal interactions within the developing biofilms, resulting in a loss of vertically aligned polarized growing filaments. Consequently, this hypoxia-typic morphotype (called H-MORPH) with altered biofilm architecture leads to increased hypoxia fitness, increased host inflammation, rapid disease progression, and mortality in a murine model of invasive aspergillosis. GcnA is directly involved in the reduction total surface chitin and the increase beta-glucan exposure, and mediates the detachment of the extracellular matrix and especially of its component galactosaminogalactan (GAG). This Aspergillus fumigatus (strain CBS 144.89 / FGSC A1163 / CEA10) (Neosartorya fumigata) protein is Subtelomeric hrmA-associated cluster protein cgnA.